We begin with the raw amino-acid sequence, 119 residues long: NADH-quinone oxidoreductase subunit A (119 aa).

3 helical membrane passes run 9 to 29, 63 to 83, and 88 to 108; these read VLLF…LGYV, LVAI…PWAV, and VGGA…VGFV.

Belongs to the complex I subunit 3 family. In terms of assembly, NDH-1 is composed of 14 different subunits. Subunits NuoA, H, J, K, L, M, N constitute the membrane sector of the complex.

It localises to the cell inner membrane. It carries out the reaction a quinone + NADH + 5 H(+)(in) = a quinol + NAD(+) + 4 H(+)(out). Functionally, NDH-1 shuttles electrons from NADH, via FMN and iron-sulfur (Fe-S) centers, to quinones in the respiratory chain. The immediate electron acceptor for the enzyme in this species is believed to be ubiquinone. Couples the redox reaction to proton translocation (for every two electrons transferred, four hydrogen ions are translocated across the cytoplasmic membrane), and thus conserves the redox energy in a proton gradient. The protein is NADH-quinone oxidoreductase subunit A of Delftia acidovorans (strain DSM 14801 / SPH-1).